Reading from the N-terminus, the 938-residue chain is MSDYKSTLNLPETGFPMRGDLAKREPGMLARWTDDDLYGIIRAAKKGKKTFILHDGPPYANGSIHIGHSVNKILKDIIVKSKGLSGYDSPYVPGWDCHGLPIELKVEQEYGKPGEKFTAAEFRAKCREYAATQVDGQRKDFIRLGVLGDWSHPYLTMDFKTEANIIRALGKIIGNGHLHKGAKPVHWCVDCRSALAEAEVEYYDKTSPSIDVAFQAVDQDALKAKFAVSNVNGPISLVIWTTTPWTLPANRAISIAPDFDYALVQIDGQAVILAKDLVESVMQRIGVTDYTILGTVKGAELELLRFTHPFMGFDVPAILGDHVTLDAGTGAVHTAPGHGPDDYVIGQKYGLETANPVGPDGTYLPGTYPTLDGVNVFKANDIVVALLQEKGALLHVEKMQHSYPCCWRHKTPIIFRATPQWFVSMDQKGLRAQSLKEIKGVQWIPDWGQARIESMVANRPDWCISRQRTWGVPMSLFVHKDTEELHPRTLELMEEVAKRVEVDGIQAWWDLDAKEILGDEADQYVKVPDTLDVWFDSGSTHSSVVDVRPEFAGHAADMYLEGSDQHRGWFMSSLMISTAMKGKAPYRQVLTHGFTVDGQGRKMSKSIGNTVSPQDVMNKLGADILRLWVASTDYTGEMAVSDEILKRAADSYRRIRNTARFLLANLNGFDPAKDMVKPEEMVVLDRWAVGCAKAAQEDILKAYEAYDFHEVVQRLMRFCSVEMGSFYLDIIKDRQYTAKADSVARRSCQTALYHIAEALVRWMAPILSFTADEVWGYLPGEREKYVFTGEWYEGLFGLADSEAMNDAFWDELLKVRGEVNKVIEQARADKKVGGSLEAAVTLYAEPELAAKLTALGDELRFVLLTSGATVADYNDAPADAQQSEVLKGLKVALSKAEGEKCPRCWHYTQDVGKVAEHAEICGRCVSNVAGDGEKRKFA.

Positions 58-68 (PYANGSIHIGH) match the 'HIGH' region motif. Residue lysine 183 is modified to N6-acetyllysine. Glutamate 561 lines the L-isoleucyl-5'-AMP pocket. Residues 602-606 (KMSKS) carry the 'KMSKS' region motif. Lysine 605 contacts ATP. 4 residues coordinate Zn(2+): cysteine 901, cysteine 904, cysteine 921, and cysteine 924.

It belongs to the class-I aminoacyl-tRNA synthetase family. IleS type 1 subfamily. Monomer. The cofactor is Zn(2+).

Its subcellular location is the cytoplasm. It carries out the reaction tRNA(Ile) + L-isoleucine + ATP = L-isoleucyl-tRNA(Ile) + AMP + diphosphate. Functionally, catalyzes the attachment of isoleucine to tRNA(Ile). As IleRS can inadvertently accommodate and process structurally similar amino acids such as valine, to avoid such errors it has two additional distinct tRNA(Ile)-dependent editing activities. One activity is designated as 'pretransfer' editing and involves the hydrolysis of activated Val-AMP. The other activity is designated 'posttransfer' editing and involves deacylation of mischarged Val-tRNA(Ile). The polypeptide is Isoleucine--tRNA ligase (Escherichia fergusonii (strain ATCC 35469 / DSM 13698 / CCUG 18766 / IAM 14443 / JCM 21226 / LMG 7866 / NBRC 102419 / NCTC 12128 / CDC 0568-73)).